The chain runs to 312 residues: Ribosomal protein L11 methyltransferase (312 aa).

S-adenosyl-L-methionine is bound by residues T160, G181, D203, and N246.

It belongs to the methyltransferase superfamily. PrmA family.

It is found in the cytoplasm. The enzyme catalyses L-lysyl-[protein] + 3 S-adenosyl-L-methionine = N(6),N(6),N(6)-trimethyl-L-lysyl-[protein] + 3 S-adenosyl-L-homocysteine + 3 H(+). Functionally, methylates ribosomal protein L11. The sequence is that of Ribosomal protein L11 methyltransferase from Staphylococcus aureus (strain COL).